The primary structure comprises 320 residues: PUP1 protein homolog (320 aa).

The next 2 helical transmembrane spans lie at 66-85 and 100-119; these read MWGGWLGFSAVFLTPFAYRY and FVLGVMALFFATNFAGRSMY. Residues 205 to 320 form a disordered region; that stretch reads GGVFNGSPFM…QSGRYGGNRS (116 aa). S230 is modified (phosphoserine). Residues 253-266 are compositionally biased toward polar residues; the sequence is GDNSSSSSWENIRN. Residues 267-284 are compositionally biased toward basic and acidic residues; that stretch reads TSRDQSQESDASVDHESD.

The protein belongs to the PUP1 family.

It localises to the mitochondrion membrane. The polypeptide is PUP1 protein homolog (Saccharomyces cerevisiae (strain ATCC 204508 / S288c) (Baker's yeast)).